Consider the following 170-residue polypeptide: Large ribosomal subunit protein uL10 (170 aa).

Belongs to the universal ribosomal protein uL10 family. As to quaternary structure, part of the ribosomal stalk of the 50S ribosomal subunit. The N-terminus interacts with L11 and the large rRNA to form the base of the stalk. The C-terminus forms an elongated spine to which L12 dimers bind in a sequential fashion forming a multimeric L10(L12)X complex.

Forms part of the ribosomal stalk, playing a central role in the interaction of the ribosome with GTP-bound translation factors. In Chlamydia abortus (strain DSM 27085 / S26/3) (Chlamydophila abortus), this protein is Large ribosomal subunit protein uL10.